The primary structure comprises 236 residues: Envelope glycoprotein (236 aa).

Topologically, residues 1–202 (CQFDGNTISG…EWILGVLNGN (202 aa)) are lumenal. The N-linked (GlcNAc...) asparagine; by host glycan is linked to N25. Intrachain disulfides connect C67–C97, C90–C142, C107–C112, C143–C148, and C182–C186. The chain crosses the membrane as a helical span at residues 203–223 (WMVVAVLIALLILSILLFTLC). 2 binding to the ribonucleoprotein regions span residues 219–231 (LFTL…PSYR) and 219–236 (LFTL…EHKP). At 224-236 (CPRRPSYRKEHKP) the chain is on the cytoplasmic side.

It belongs to the hantavirus envelope glycoprotein family. As to quaternary structure, homodimer. Homotetramer; forms heterotetrameric Gn-Gc spikes in the pre-fusion conformation. Homotrimer; forms homotrimer in the post-fusion conformation at acidic pH. Interacts (via C-terminus) with the nucleoprotein. Envelope polyprotein precursor is quickly cleaved in vivo just after synthesis, presumably by host signal peptidase.

It localises to the virion membrane. Its subcellular location is the host cell surface. The protein resides in the host Golgi apparatus membrane. It is found in the host endoplasmic reticulum membrane. Forms homotetramers with glycoprotein N at the surface of the virion. Attaches the virion to host cell receptors including integrin ITGAV/ITGB3. This attachment induces virion internalization predominantly through clathrin-dependent endocytosis. Class II fusion protein that promotes fusion of viral membrane with host endosomal membrane after endocytosis of the virion. The polypeptide is Envelope glycoprotein (GP) (Homo sapiens (Human)).